Consider the following 411-residue polypeptide: Endo-1,4-beta-xylanase A (411 aa).

An N-terminal signal peptide occupies residues 1 to 33 (MKKFKIRKLMARVLALALVFSTFFMVSKVDANA). In terms of domain architecture, GH10 spans 34–382 (ASYNLMETYG…KPAYDEVVKA (349 aa)). Residue glutamate 201 is the Proton donor of the active site. Residue glutamate 311 is the Nucleophile of the active site. The interval 387–411 (FGNPGSFTPQPTITPQPTPTPSGQT) is disordered. Residues 398–411 (TITPQPTPTPSGQT) show a composition bias toward pro residues.

The protein belongs to the glycosyl hydrolase 10 (cellulase F) family.

The enzyme catalyses Endohydrolysis of (1-&gt;4)-beta-D-xylosidic linkages in xylans.. It participates in glycan degradation; xylan degradation. Its function is as follows. B.fibrisolvens is located in the rumen of ruminant animals, where it contributes to the animal's digestion of plant material by hydrolyzing hemicellulose with its xylanases. The chain is Endo-1,4-beta-xylanase A (xynA) from Butyrivibrio fibrisolvens.